A 480-amino-acid chain; its full sequence is UDP-N-acetylmuramoyl-L-alanyl-D-glutamate--2,6-diaminopimelate ligase (480 aa).

Residue Ser21 coordinates UDP-N-acetyl-alpha-D-muramoyl-L-alanyl-D-glutamate. 98-104 (GTNGKSS) is an ATP binding site. Residues 144–145 (TT), Ser171, Gln177, and Arg179 each bind UDP-N-acetyl-alpha-D-muramoyl-L-alanyl-D-glutamate. N6-carboxylysine is present on Lys211. Meso-2,6-diaminopimelate-binding positions include Arg372, 396-399 (DNPR), Gly446, and Glu450. The short motif at 396-399 (DNPR) is the Meso-diaminopimelate recognition motif element.

It belongs to the MurCDEF family. MurE subfamily. Requires Mg(2+) as cofactor. Carboxylation is probably crucial for Mg(2+) binding and, consequently, for the gamma-phosphate positioning of ATP.

It is found in the cytoplasm. It carries out the reaction UDP-N-acetyl-alpha-D-muramoyl-L-alanyl-D-glutamate + meso-2,6-diaminopimelate + ATP = UDP-N-acetyl-alpha-D-muramoyl-L-alanyl-gamma-D-glutamyl-meso-2,6-diaminopimelate + ADP + phosphate + H(+). It functions in the pathway cell wall biogenesis; peptidoglycan biosynthesis. Catalyzes the addition of meso-diaminopimelic acid to the nucleotide precursor UDP-N-acetylmuramoyl-L-alanyl-D-glutamate (UMAG) in the biosynthesis of bacterial cell-wall peptidoglycan. The chain is UDP-N-acetylmuramoyl-L-alanyl-D-glutamate--2,6-diaminopimelate ligase from Rickettsia prowazekii (strain Madrid E).